We begin with the raw amino-acid sequence, 249 residues long: MAEQTLSFVDCLTSRFPTVRVSVAQPRGEITLDVPVVEWCAVCKGLRDEFDFEQLSDLCGVDYLGYGNAEWDTTGVSAQGFSRGVAGKAVGRFAWGEFPSAGTNDGTQPWDVPQERFAVLAHLISYRHNRRLRVRCFASNDALPIVASLTDVWPGVNWFEREAFDLFGIVFEGHLDLRRILTDYGFIGHPFRKDFPLTGNVEVRYDEEKKRVVYVPVTSVEPRVSVPRVIRDDARFGAAAGESTHSETV.

This sequence belongs to the complex I 30 kDa subunit family. As to quaternary structure, NDH-1 is composed of 14 different subunits. Subunits NuoB, C, D, E, F, and G constitute the peripheral sector of the complex.

Its subcellular location is the cell inner membrane. It carries out the reaction a quinone + NADH + 5 H(+)(in) = a quinol + NAD(+) + 4 H(+)(out). NDH-1 shuttles electrons from NADH, via FMN and iron-sulfur (Fe-S) centers, to quinones in the respiratory chain. The immediate electron acceptor for the enzyme in this species is believed to be ubiquinone. Couples the redox reaction to proton translocation (for every two electrons transferred, four hydrogen ions are translocated across the cytoplasmic membrane), and thus conserves the redox energy in a proton gradient. The sequence is that of NADH-quinone oxidoreductase subunit C from Xylella fastidiosa (strain M12).